We begin with the raw amino-acid sequence, 248 residues long: Probable transcriptional regulatory protein Psyr_1407 (248 aa).

The protein belongs to the TACO1 family.

The protein localises to the cytoplasm. In Pseudomonas syringae pv. syringae (strain B728a), this protein is Probable transcriptional regulatory protein Psyr_1407.